The primary structure comprises 231 residues: Lipoprotein-releasing system ATP-binding protein LolD (231 aa).

The 226-residue stretch at 6–231 (LQVQAVSKSY…YLQAVAEHAQ (226 aa)) folds into the ABC transporter domain. ATP is bound at residue 42–49 (GTSGSGKS).

It belongs to the ABC transporter superfamily. Lipoprotein translocase (TC 3.A.1.125) family. The complex is composed of two ATP-binding proteins (LolD) and two transmembrane proteins (LolC and LolE).

Its subcellular location is the cell inner membrane. Part of the ABC transporter complex LolCDE involved in the translocation of mature outer membrane-directed lipoproteins, from the inner membrane to the periplasmic chaperone, LolA. Responsible for the formation of the LolA-lipoprotein complex in an ATP-dependent manner. The chain is Lipoprotein-releasing system ATP-binding protein LolD from Shewanella sp. (strain MR-7).